A 580-amino-acid chain; its full sequence is Putative monoterpene synthase 8 (580 aa).

The transit peptide at 1-44 (MACTSNLSSLSKSWAVLDVPRGAPKATGLWLKRQFIFKTSRICM) directs the protein to the chloroplast. Aspartate 333, aspartate 337, aspartate 478, threonine 482, and glutamate 486 together coordinate Mg(2+). The DDXXD motif signature appears at 333-337 (DDIFD).

This sequence belongs to the terpene synthase family. Tpsg subfamily. Monomer. It depends on Mg(2+) as a cofactor. Mn(2+) is required as a cofactor. Confined to flowers.

It localises to the plastid. It is found in the chloroplast. It participates in secondary metabolite biosynthesis; terpenoid biosynthesis. In terms of biological role, monoterpene synthase (mono-TPS) involved in the biosynthesis of monoterpenes natural products, constituent of coffee beverage aroma. This is Putative monoterpene synthase 8 from Coffea arabica (Arabian coffee).